Here is a 347-residue protein sequence, read N- to C-terminus: Photosystem II protein D1 (347 aa).

3 consecutive transmembrane segments (helical) span residues 31 to 48, 120 to 135, and 144 to 158; these read YIGW…LAII, HFIG…EWEF, and WIYL…AATA. His-120 serves as a coordination point for chlorophyll a. Residue Trp-128 coordinates pheophytin a. Residues Asp-172 and Glu-191 each coordinate [CaMn4O5] cluster. The helical transmembrane segment at 199-220 threads the bilayer; sequence FHILGVAGVFGGSLFSAMHGSL. Residue His-200 participates in chlorophyll a binding. A quinone is bound by residues His-217 and 266–267; that span reads SF. His-217 contacts Fe cation. His-274 lines the Fe cation pocket. A helical membrane pass occupies residues 276-290; it reads FLAAWPVIGIWFTAL. Residues His-334, Glu-335, and Asp-344 each contribute to the [CaMn4O5] cluster site.

It belongs to the reaction center PufL/M/PsbA/D family. As to quaternary structure, PSII is composed of 1 copy each of membrane proteins PsbA, PsbB, PsbC, PsbD, PsbE, PsbF, PsbH, PsbI, PsbJ, PsbK, PsbL, PsbM, PsbT, PsbX, PsbY, PsbZ, Psb30/Ycf12, at least 3 peripheral proteins of the oxygen-evolving complex and a large number of cofactors. It forms dimeric complexes. It depends on The D1/D2 heterodimer binds P680, chlorophylls that are the primary electron donor of PSII, and subsequent electron acceptors. It shares a non-heme iron and each subunit binds pheophytin, quinone, additional chlorophylls, carotenoids and lipids. D1 provides most of the ligands for the Mn4-Ca-O5 cluster of the oxygen-evolving complex (OEC). There is also a Cl(-1) ion associated with D1 and D2, which is required for oxygen evolution. The PSII complex binds additional chlorophylls, carotenoids and specific lipids. as a cofactor. In terms of processing, tyr-163 forms a radical intermediate that is referred to as redox-active TyrZ, YZ or Y-Z.

Its subcellular location is the plastid. It localises to the chloroplast thylakoid membrane. It carries out the reaction 2 a plastoquinone + 4 hnu + 2 H2O = 2 a plastoquinol + O2. Its function is as follows. Photosystem II (PSII) is a light-driven water:plastoquinone oxidoreductase that uses light energy to abstract electrons from H(2)O, generating O(2) and a proton gradient subsequently used for ATP formation. It consists of a core antenna complex that captures photons, and an electron transfer chain that converts photonic excitation into a charge separation. The D1/D2 (PsbA/PsbD) reaction center heterodimer binds P680, the primary electron donor of PSII as well as several subsequent electron acceptors. The polypeptide is Photosystem II protein D1 (Alexandrium tamarense (Red tide dinoflagellate)).